The chain runs to 420 residues: Mannose-1-phosphate guanylyltransferase regulatory subunit alpha (420 aa).

The interval 2-251 (LKAVILIGGP…DGIWSQIKSA (250 aa)) is substrate-binding domain. Residues Glu85 and Gln247 each contribute to the GDP-alpha-D-mannose site. The hexapeptide repeat domain stretch occupies residues 273–420 (LARHTAGGPR…SRSFTNQIIL (148 aa)). The segment at 356 to 384 (TPNDPNPNDPRARMDSESLFKDGKLLPAI) is C-loop.

Belongs to the transferase hexapeptide repeat family. Component of the GMPPA-GMPPB mannose-1-phosphate guanylyltransferase complex composed of 4 GMPPA subunits and 8 GMPPB subunits; the complex is organized into three layers, a central layer made up of 2 GMPPA dimers sandwiched between two layers each made up of 2 GMPPB dimers.

The protein resides in the cytoplasm. In terms of biological role, regulatory subunit of the GMPPA-GMPPB mannose-1-phosphate guanylyltransferase complex; reduces the catalytic activity of GMPPB when part of the complex. Mediates allosteric feedback inhibition of GMPPB catalytic activity upon binding GDP-alpha-D-mannose. Together with GMPPB regulates GDP-alpha-D-mannose levels. This Rattus norvegicus (Rat) protein is Mannose-1-phosphate guanylyltransferase regulatory subunit alpha (Gmppa).